The sequence spans 330 residues: Phosphate acyltransferase (330 aa).

This sequence belongs to the PlsX family. Homodimer. Probably interacts with PlsY.

The protein resides in the cytoplasm. The catalysed reaction is a fatty acyl-[ACP] + phosphate = an acyl phosphate + holo-[ACP]. Its pathway is lipid metabolism; phospholipid metabolism. In terms of biological role, catalyzes the reversible formation of acyl-phosphate (acyl-PO(4)) from acyl-[acyl-carrier-protein] (acyl-ACP). This enzyme utilizes acyl-ACP as fatty acyl donor, but not acyl-CoA. This chain is Phosphate acyltransferase, found in Bacillus anthracis (strain A0248).